The chain runs to 250 residues: MSNIQTGYLNAQDAAALDVELMSTPGFSLEQLMELAGLSVAEAVYEVAFGGDGEKASNDGGRKKRVLLVCGPGNNGGDGLVAARHLAHFGLESTIVYPKQSSKQHFVNLVKQCEDMGIPILQEIPSTNDSSKVEETKYDVIVDAIFGFSFHGTAPREPYATAISQMVQLQKEQSVLLSVDVPSGWDVDGGDLTGTNFHPDVLISLTAPKLSAKKFEGRHFVGGRFLPPSIAEKYGIQKPPYPGVSQVMEL.

One can recognise a YjeF N-terminal domain in the interval 14-238 (AAALDVELMS…SIAEKYGIQK (225 aa)). 74–78 (NNGGD) contributes to the (6S)-NADPHX binding site. Residues N75 and D143 each contribute to the K(+) site. (6S)-NADPHX contacts are provided by residues 147–154 (GFSFHGTA), Y159, and D180. S183 contributes to the K(+) binding site.

The protein belongs to the NnrE/AIBP family. It depends on K(+) as a cofactor.

The enzyme catalyses (6R)-NADHX = (6S)-NADHX. It catalyses the reaction (6R)-NADPHX = (6S)-NADPHX. Functionally, catalyzes the epimerization of the S- and R-forms of NAD(P)HX, a damaged form of NAD(P)H that is a result of enzymatic or heat-dependent hydration. This is a prerequisite for the S-specific NAD(P)H-hydrate dehydratase to allow the repair of both epimers of NAD(P)HX. This Thalassiosira pseudonana (Marine diatom) protein is NAD(P)H-hydrate epimerase.